Here is a 414-residue protein sequence, read N- to C-terminus: GA-binding protein subunit beta-2 (414 aa).

5 ANK repeats span residues 5-34 (DLGK…PFTT), 37-66 (LGTS…SRDA), 70-99 (VDRT…DVNA), 103-132 (LQMT…DVYA), and 136-166 (FDKS…QVNT). A Phosphoserine modification is found at S218. Residues 310-362 (EEMKEGSERELLQQQLQEANRRAQEYRHQLLKKEQEAEQYRLRLEAMAQQQTN) adopt a coiled-coil conformation.

In terms of assembly, heterotetramer of two alpha and two beta subunits. The C-terminal is necessary for the formation of a heterotetrameric GABP-alpha-2/beta-2 complex, and also facilitates homotypic dimerization. Interacts with ADGRB2. As to expression, high levels in thymus, spleen, kidney and intestine.

The protein resides in the nucleus. Its function is as follows. Transcription factor capable of interacting with purine rich repeats (GA repeats). Must associate with GABP-alpha to bind DNA. The protein is GA-binding protein subunit beta-2 (Gabpb2) of Mus musculus (Mouse).